A 263-amino-acid chain; its full sequence is Splicing regulator sde2 (263 aa).

The propeptide at M1–G84 is UBL. 3 disordered regions span residues A95 to N118, P137 to D158, and S194 to L263. Residues K102–G117 are compositionally biased toward basic and acidic residues. Composition is skewed to low complexity over residues S194–T209 and N219–R230.

This sequence belongs to the SDE2 family. In terms of assembly, interacts with cay1/cactin. Interacts with prp19. Interacts with cwf12. Interacts with cdc5. Post-translationally, the N-terminal UBL (ubiquitin-like) propeptide is cleaved at Gly-84 by the deubiquitinating enzymes ubp5 and ubp15; the resulting mature sde2 associates with spliceosomes. In terms of processing, polyubiquitinated; ubiquitination is partially dependent on ubr11.

The protein localises to the cytoplasm. It localises to the nucleus. Functionally, plays a role in pre-mRNA splicing by facilitating excision of introns featuring relatively long (&gt;21 nucleotides) spacing between the branchpoint and 3'-splice site (ss). Recruits cactin to the spliceosome which may enable folding of RNA between the branchpoint and 3'-ss, to guide the splice site towards the spliceosome's catalytic center. Required for proper chromatin organization by assisting splicing of components involved in genomic stability and telomere organization. The polypeptide is Splicing regulator sde2 (Schizosaccharomyces pombe (strain 972 / ATCC 24843) (Fission yeast)).